A 519-amino-acid chain; its full sequence is Circadian clock oscillator protein KaiC (519 aa).

KaiC domains lie at 1–246 and 260–519; these read MSEK…VNIF and VRVS…GSDS. Residues Gly-48, Thr-49, Gly-50, Lys-51, Thr-52, Leu-53, Lys-223, Leu-224, Arg-225, Thr-227, His-229, Thr-239, Thr-289, Gly-290, Thr-291, Gly-292, Lys-293, Thr-294, and Leu-295 each coordinate ATP. Thr-52 is a binding site for Mg(2+). Thr-294 contributes to the Mg(2+) binding site. Glu-317 lines the Mg(2+) pocket. ATP is bound at residue Trp-330. Phosphoserine; by autocatalysis is present on Ser-430. Thr-431 carries the post-translational modification Phosphothreonine; by autocatalysis. 7 residues coordinate ATP: Arg-450, Lys-456, Met-457, Arg-458, Ser-460, His-462, and Lys-464.

It belongs to the KaiC family. Homohexamer; hexamerization is dependent on ATP-binding. The KaiABC complex composition changes during the circadian cycle to control KaiC phosphorylation. Complexes KaiC(6), KaiA(2-4):KaiC(6), KaiB(6):KaiC(6) and KaiC(6):KaiB(6):KaiA(12) are among the most important forms, many form cooperatively. KaiC interacts with SasA, activating its autokinase function and leading to RpaA activation. Mg(2+) is required as a cofactor. Phosphorylated on serine and threonine residues by autocatalysis. Has a 4 step phosphorylation cycle; the autokinase acts first on Thr-431, then Ser-430. When Ser-430 is modified KaiC switches to an autophosphatase mode, acting first on phospho-Thr-431 then phospho-Ser-430.

The catalysed reaction is L-seryl-[protein] + ATP = O-phospho-L-seryl-[protein] + ADP + H(+). It carries out the reaction L-threonyl-[protein] + ATP = O-phospho-L-threonyl-[protein] + ADP + H(+). It catalyses the reaction ATP + H2O = ADP + phosphate + H(+). Its activity is regulated as follows. The interaction with KaiA enhances its phosphorylation status, while the interaction with KaiB decreases it. Its function is as follows. Central component of the KaiABC oscillator complex, which constitutes the main circadian regulator in cyanobacteria. Complex composition changes during the circadian cycle to control KaiC phosphorylation. KaiA stimulates KaiC autophosphorylation, while KaiB sequesters KaiA, leading to KaiC autodephosphorylation. Clock output pathways impact the RpaA transcriptional regulator. KaiC enhances the autophosphorylation activity of SasA, which then transfers its phosphate group to RpaA to activate it. KaiB and KaiC together enhance the phospho-RpaA dephosphatase activity of CikA. Has a weak, temperature-independent ATPase activity; ATPase activity defines the circadian period. The phosphorylation state of KaiC modulates its ATPase activity and effects KaiB binding. The chain is Circadian clock oscillator protein KaiC from Nostoc sp. (strain PCC 7120 / SAG 25.82 / UTEX 2576).